We begin with the raw amino-acid sequence, 69 residues long: MGMRMMFTVFLLVVLATTVVSFTSNRVLDPAFRRRNAAAKASDLIALNARRPECCTHPACHVSNPELCG.

Positions 1-21 (MGMRMMFTVFLLVVLATTVVS) are cleaved as a signal peptide. Positions 22-49 (FTSNRVLDPAFRRRNAAAKASDLIALNA) are excised as a propeptide. Residues Pro52 and Pro58 each carry the 4-hydroxyproline; in Mr1.7b modification. 2 disulfide bridges follow: Cys54–Cys60 and Cys55–Cys68. The interval 56–58 (THP) is lacks the Ser-Xaa-Pro motif that is crucial for potent interaction with nAChR. Cys68 bears the Cysteine amide mark.

This sequence belongs to the conotoxin A superfamily. Post-translationally, two 4-hydroxyprolines have been detected by MS but the assignment of which of the three prolines is modified is uncertain. In terms of tissue distribution, expressed by the venom duct.

Its subcellular location is the secreted. Acts as a co-agonist with PNU (an alpha-7 nAChR-selective allosteric modulator) at the endogenous alpha-7/CHRNA7 nicotinic acetylcholine receptors (nAChR) when tested in human SH-SY5Y neuroblastoma cells. Is the third alpha-conotoxin that acts as an agonist (after alpha-conotoxin SrIA/SrIB). Also acts as an antagonist at human alpha-7 nAChRs heterologously expressed in Xenopus oocytes. Has possibly a distinct nAChR binding mode from other alpha-conotoxins, due to a different three residue motif (lacks the Ser-Xaa-Pro motif). Its function is as follows. Acts as a weak partial agonist at alpha-7/CHRNA7 nicotinic acetylcholine receptors (nAChR) when tested in human SH-SY5Y neuroblastoma cells. Has possibly a distinct nAChR binding mode from other alpha-conotoxins, due to a different three residue motif (lacks the Ser-Xaa-Pro motif). This Conus marmoreus (Marble cone) protein is Alpha-conotoxin Mr1.7a.